Consider the following 308-residue polypeptide: Glutaminase (308 aa).

Substrate is bound by residues Ser66, Asn117, Glu161, Asn168, Tyr192, Tyr244, and Val262.

This sequence belongs to the glutaminase family. Homotetramer.

The enzyme catalyses L-glutamine + H2O = L-glutamate + NH4(+). In Photorhabdus laumondii subsp. laumondii (strain DSM 15139 / CIP 105565 / TT01) (Photorhabdus luminescens subsp. laumondii), this protein is Glutaminase.